A 728-amino-acid polypeptide reads, in one-letter code: Catalase-peroxidase (728 aa).

Residues 1 to 19 (MSTEAKCPVTGGATRSSSA) form the signal peptide. The disordered stretch occupies residues 1–20 (MSTEAKCPVTGGATRSSSAG). A cross-link (tryptophyl-tyrosyl-methioninium (Trp-Tyr) (with M-245)) is located at residues 96-219 (WHAAGTYRIG…LAAVQMGLIY (124 aa)). Catalysis depends on His97, which acts as the Proton acceptor. Residues 219–245 (YVNPEGPNGKPDPVAAARDIRETFARM) constitute a cross-link (tryptophyl-tyrosyl-methioninium (Tyr-Met) (with W-96)). His260 provides a ligand contact to heme b.

This sequence belongs to the peroxidase family. Peroxidase/catalase subfamily. Homodimer or homotetramer. Requires heme b as cofactor. In terms of processing, formation of the three residue Trp-Tyr-Met cross-link is important for the catalase, but not the peroxidase activity of the enzyme.

The enzyme catalyses H2O2 + AH2 = A + 2 H2O. It catalyses the reaction 2 H2O2 = O2 + 2 H2O. Its function is as follows. Bifunctional enzyme with both catalase and broad-spectrum peroxidase activity. This Acidiphilium cryptum (strain JF-5) protein is Catalase-peroxidase.